Here is a 407-residue protein sequence, read N- to C-terminus: MQYLISSLIFLIPSLGMVAGLSVAATVTIFLLMLFLRGINRHCERLKGAWQSHKAGLLRLLRQNLQFFLAMTIKTELLFTAWCFISCLFAIRPINSLATFIQVFILLFLGFTVSNCVPFGNRVQLKNSLILGILTAILLFFIEYSSHGFLTRTFKASFGLYMLDRGCALLSITSWVAIIILLSSGKRRHALMLYILVLYLLSISDSLASFLGFSIGGVIFILARLIKPIFFKLIAISLITGSLLFPVIAKQIEPRDLSEKYLATQPSAAHRLFIWHFVANKITLKPILGYGFASSKYIKVNNSEMINYNGEKWHPLPLHPHNNILQITLELGIIGLILFLCLVYKYLKQINNIKSSNFRAASYSCFINYYIIGMISYNIWQIWWISSGIWVLVLMKLLVKPDIVVDN.

The next 10 helical transmembrane spans lie at 15–35, 71–91, 100–120, 129–149, 166–186, 203–223, 229–249, 272–292, 324–344, and 379–399; these read LGMV…LMLF, MTIK…LFAI, FIQV…VPFG, LILG…SHGF, GCAL…SSGK, ISDS…FILA, IFFK…PVIA, LFIW…GYGF, ILQI…CLVY, and IWQI…KLLV.

Belongs to the O-antigen ligase family.

The protein localises to the membrane. The polypeptide is Putative polysaccharide ligase RF_0568 (Rickettsia felis (strain ATCC VR-1525 / URRWXCal2) (Rickettsia azadi)).